The following is a 185-amino-acid chain: UPF0200 protein Mevan_0592 (185 aa).

8–15 lines the ATP pocket; it reads GMPGSGKS.

This sequence belongs to the UPF0200 family.

In Methanococcus vannielii (strain ATCC 35089 / DSM 1224 / JCM 13029 / OCM 148 / SB), this protein is UPF0200 protein Mevan_0592.